We begin with the raw amino-acid sequence, 104 residues long: Urease subunit beta (104 aa).

This sequence belongs to the urease beta subunit family. As to quaternary structure, heterotrimer of UreA (gamma), UreB (beta) and UreC (alpha) subunits. Three heterotrimers associate to form the active enzyme.

It is found in the cytoplasm. The catalysed reaction is urea + 2 H2O + H(+) = hydrogencarbonate + 2 NH4(+). Its pathway is nitrogen metabolism; urea degradation; CO(2) and NH(3) from urea (urease route): step 1/1. In Rhodococcus opacus (strain B4), this protein is Urease subunit beta.